A 122-amino-acid polypeptide reads, in one-letter code: Acidic phospholipase A2 BpirPLA2-I (122 aa).

Intrachain disulfides connect Cys-26–Cys-115, Cys-28–Cys-44, Cys-43–Cys-95, Cys-49–Cys-122, Cys-50–Cys-88, Cys-57–Cys-81, and Cys-75–Cys-86. Ca(2+) contacts are provided by Tyr-27, Gly-29, and Gly-31. The active site involves His-47. Asp-48 lines the Ca(2+) pocket. Asp-89 is a catalytic residue. Residues 105 to 117 carry the Antiplatelet activity motif; that stretch reads IKYWFYGAKNCQE.

The protein belongs to the phospholipase A2 family. Group II subfamily. D49 sub-subfamily. Ca(2+) serves as cofactor. In terms of tissue distribution, expressed by the venom gland.

Its subcellular location is the secreted. It catalyses the reaction a 1,2-diacyl-sn-glycero-3-phosphocholine + H2O = a 1-acyl-sn-glycero-3-phosphocholine + a fatty acid + H(+). With respect to regulation, inhibited by EDTA and p-bromophenacyl bromide (BPB). Its function is as follows. Snake venom phospholipase A2 (PLA2) that inhibits collagen/ADP-induced platelet aggregation, and induces hypotension in rats (activity abolished in the presence of p-bromophenacyl bromide). PLA2 catalyzes the calcium-dependent hydrolysis of the 2-acyl groups in 3-sn-phosphoglycerides. The chain is Acidic phospholipase A2 BpirPLA2-I from Bothrops pirajai (Piraja's lancehead).